We begin with the raw amino-acid sequence, 110 residues long: Protein NATD1 (110 aa).

The N-acetyltransferase domain occupies 19–109; the sequence is EHDKKRRQFS…PHPQYLERIL (91 aa).

It belongs to the NATD1 family.

In Danio rerio (Zebrafish), this protein is Protein NATD1 (natd1).